Reading from the N-terminus, the 353-residue chain is MCKSRVHSFLQALPKVEQHLHIEGTLEPELLFTLAEKNGIELPNDPVYESADKLRERYGRFTSLDDFLHYYYLGMSVLITENDFETLAYQYFQRAAGENVRHAEIFFDPQAHIARGVSYDTVVAGLVAAKHRAQKELGITVELIVCILRHLPVPESHALVDTLLDRGHFNDGTLTGFGMVSSEKAFPPELFTDVYARVAKTGTHLTTHAGEEAPPSFITASLEHLKVSRIDHGLAAAQDPELLKKLAANRTLLTFCPWSNVALCNLPELADAPVREFLDAGVLFSVNSDDPAYFGAYVQEVYCRVQDTFNLSVKDWAWIVRGAVEESWCSEERKKEILKEMEQVLEKYKDLDA.

Residues H19, H21, and H208 each coordinate Zn(2+). The active-site Proton donor is the E211. D289 contributes to the Zn(2+) binding site. D290 serves as a coordination point for substrate.

Belongs to the metallo-dependent hydrolases superfamily. Adenosine and AMP deaminases family. Adenine deaminase type 2 subfamily. Zn(2+) serves as cofactor.

It localises to the cytoplasm. It is found in the nucleus. It catalyses the reaction adenine + H2O + H(+) = hypoxanthine + NH4(+). Functionally, catalyzes the hydrolytic deamination of adenine to hypoxanthine. Plays an important role in the purine salvage pathway and in nitrogen catabolism. This Gibberella zeae (strain ATCC MYA-4620 / CBS 123657 / FGSC 9075 / NRRL 31084 / PH-1) (Wheat head blight fungus) protein is Adenine deaminase.